Reading from the N-terminus, the 513-residue chain is 2-isopropylmalate synthase (513 aa).

In terms of domain architecture, Pyruvate carboxyltransferase spans 7–269; that stretch reads VYIFDTTLRD…TTGIVTEELF (263 aa). The Mn(2+) site is built by D16, H204, H206, and N240. Residues 393–513 form a regulatory domain region; sequence ALQFLSVHCG…KEEERTCPQL (121 aa).

This sequence belongs to the alpha-IPM synthase/homocitrate synthase family. LeuA type 1 subfamily. In terms of assembly, homodimer. Mn(2+) is required as a cofactor.

It is found in the cytoplasm. The catalysed reaction is 3-methyl-2-oxobutanoate + acetyl-CoA + H2O = (2S)-2-isopropylmalate + CoA + H(+). Its pathway is amino-acid biosynthesis; L-leucine biosynthesis; L-leucine from 3-methyl-2-oxobutanoate: step 1/4. Catalyzes the condensation of the acetyl group of acetyl-CoA with 3-methyl-2-oxobutanoate (2-ketoisovalerate) to form 3-carboxy-3-hydroxy-4-methylpentanoate (2-isopropylmalate). This chain is 2-isopropylmalate synthase, found in Solidesulfovibrio magneticus (strain ATCC 700980 / DSM 13731 / RS-1) (Desulfovibrio magneticus).